Consider the following 34-residue polypeptide: Photosystem II reaction center protein M (34 aa).

The helical transmembrane segment at 5 to 25 (ILAFIATALFILVPTAFLLII) threads the bilayer.

Belongs to the PsbM family. PSII is composed of 1 copy each of membrane proteins PsbA, PsbB, PsbC, PsbD, PsbE, PsbF, PsbH, PsbI, PsbJ, PsbK, PsbL, PsbM, PsbT, PsbX, PsbY, PsbZ, Psb30/Ycf12, at least 3 peripheral proteins of the oxygen-evolving complex and a large number of cofactors. It forms dimeric complexes.

Its subcellular location is the plastid. It is found in the chloroplast thylakoid membrane. Its function is as follows. One of the components of the core complex of photosystem II (PSII). PSII is a light-driven water:plastoquinone oxidoreductase that uses light energy to abstract electrons from H(2)O, generating O(2) and a proton gradient subsequently used for ATP formation. It consists of a core antenna complex that captures photons, and an electron transfer chain that converts photonic excitation into a charge separation. This subunit is found at the monomer-monomer interface. The sequence is that of Photosystem II reaction center protein M from Cenchrus americanus (Pearl millet).